The primary structure comprises 317 residues: tRNA dimethylallyltransferase (317 aa).

Position 14-21 (14-21 (GPTAVGKT)) interacts with ATP. 16–21 (TAVGKT) is a binding site for substrate. Residues 39–42 (DSMQ) form an interaction with substrate tRNA region.

It belongs to the IPP transferase family. Monomer. Mg(2+) serves as cofactor.

The catalysed reaction is adenosine(37) in tRNA + dimethylallyl diphosphate = N(6)-dimethylallyladenosine(37) in tRNA + diphosphate. Functionally, catalyzes the transfer of a dimethylallyl group onto the adenine at position 37 in tRNAs that read codons beginning with uridine, leading to the formation of N6-(dimethylallyl)adenosine (i(6)A). This chain is tRNA dimethylallyltransferase, found in Bacillus cereus (strain ATCC 10987 / NRS 248).